The primary structure comprises 344 residues: Ion-translocating oxidoreductase complex subunit D (344 aa).

Helical transmembrane passes span 23 to 43 (LVLG…GPGT), 44 to 64 (LLNL…MLAL), 77 to 99 (SALV…WLTL), and 120 to 140 (PFNP…LEMT). Thr-172 bears the FMN phosphoryl threonine mark. Helical transmembrane passes span 198 to 218 (LGSA…LFLL), 222 to 242 (LFTW…SLLF), 252 to 272 (GSPL…FIVT), 285 to 305 (LVFG…GGYP), and 306 to 326 (DGVA…DYYT).

Belongs to the NqrB/RnfD family. In terms of assembly, the complex is composed of six subunits: RnfA, RnfB, RnfC, RnfD, RnfE and RnfG. FMN is required as a cofactor.

The protein resides in the cell inner membrane. In terms of biological role, part of a membrane-bound complex that couples electron transfer with translocation of ions across the membrane. This is Ion-translocating oxidoreductase complex subunit D from Pseudomonas aeruginosa (strain UCBPP-PA14).